A 214-amino-acid polypeptide reads, in one-letter code: MQAYQRDFIRFAIDRGVLRFGEFTLKSGRTSPYFFNAGLFNSGSALAQLGRFYAAAIVESGIPFDVLFGPAYKGIPLAAATAVALAEHHQRDLPWCFNRKEAKAHGEGGSLVGAPLTGDVLIIDDVITAGTAIREVMQIIESQDGAKAAGVLIALNRQERGNGELSAIQEVERDFGIPVVSIVSLTQVLQFLADDPALKQHLPAVEAYRAQYGI.

K26 is a binding site for 5-phospho-alpha-D-ribose 1-diphosphate. 34-35 (FF) serves as a coordination point for orotate. Residues 72-73 (YK), R99, K100, K103, H105, and 124-132 (DDVITAGTA) each bind 5-phospho-alpha-D-ribose 1-diphosphate. Positions 128 and 157 each coordinate orotate.

The protein belongs to the purine/pyrimidine phosphoribosyltransferase family. PyrE subfamily. In terms of assembly, homodimer. Mg(2+) is required as a cofactor.

The enzyme catalyses orotidine 5'-phosphate + diphosphate = orotate + 5-phospho-alpha-D-ribose 1-diphosphate. Its pathway is pyrimidine metabolism; UMP biosynthesis via de novo pathway; UMP from orotate: step 1/2. Its function is as follows. Catalyzes the transfer of a ribosyl phosphate group from 5-phosphoribose 1-diphosphate to orotate, leading to the formation of orotidine monophosphate (OMP). This is Orotate phosphoribosyltransferase from Pseudomonas fluorescens (strain ATCC BAA-477 / NRRL B-23932 / Pf-5).